We begin with the raw amino-acid sequence, 263 residues long: Eukaryotic translation initiation factor 3 subunit J-B (263 aa).

The span at 1–13 (MAAAAAAAAAAAA) shows a compositional bias: low complexity. The interval 1–115 (MAAAAAAAAA…EPEESKVLTP (115 aa)) is disordered. An N-acetylalanine modification is found at A2. The sufficient for interaction with EIF3B stretch occupies residues 6–74 (AAAAAAAAGD…KEEAEVKPEV (69 aa)). 3 positions are modified to phosphoserine: S16, S18, and S25. The span at 45-66 (EGEDEDEDVKDNWDDDDDENKE) shows a compositional bias: acidic residues. A compositionally biased stretch (basic and acidic residues) spans 67–111 (EAEVKPEVKISEKKKIAEKIKEKERQQKKRQEEIKKRLEEPEESK). The stretch at 75–140 (KISEKKKIAE…ESDLELAKET (66 aa)) forms a coiled coil. A Glycyl lysine isopeptide (Lys-Gly) (interchain with G-Cter in SUMO2) cross-link involves residue K111. T114 is modified (phosphothreonine). S132 is modified (phosphoserine). Positions 248 to 263 (YGGYEGGYVQDYEDFM) are promotes stable association with the 40S ribosome. A Phosphotyrosine modification is found at Y259.

The protein belongs to the eIF-3 subunit J family. As to quaternary structure, component of the eukaryotic translation initiation factor 3 (eIF-3) complex, which is composed of 13 subunits: EIF3A, EIF3B, EIF3C, EIF3D, EIF3E, EIF3F, EIF3G, EIF3H, EIF3I, EIF3J, EIF3K, EIF3L and EIF3M. The eIF-3 complex appears to include 3 stable modules: module A is composed of EIF3A, EIF3B, EIF3G and EIF3I; module B is composed of EIF3F, EIF3H, and EIF3M; and module C is composed of EIF3C, EIF3D, EIF3E, EIF3K and EIF3L. EIF3C of module C binds EIF3B of module A and EIF3H of module B, thereby linking the three modules. EIF3J is a labile subunit that binds to the eIF-3 complex via EIF3B. The eIF-3 complex interacts with RPS6KB1 under conditions of nutrient depletion. Mitogenic stimulation leads to binding and activation of a complex composed of MTOR and RPTOR, leading to phosphorylation and release of RPS6KB1 and binding of EIF4B to eIF-3. In terms of processing, phosphorylated. Phosphorylation is enhanced upon serum stimulation.

Its subcellular location is the cytoplasm. Component of the eukaryotic translation initiation factor 3 (eIF-3) complex, which is required for several steps in the initiation of protein synthesis. The eIF-3 complex associates with the 40S ribosome and facilitates the recruitment of eIF-1, eIF-1A, eIF-2:GTP:methionyl-tRNAi and eIF-5 to form the 43S pre-initiation complex (43S PIC). The eIF-3 complex stimulates mRNA recruitment to the 43S PIC and scanning of the mRNA for AUG recognition. The eIF-3 complex is also required for disassembly and recycling of post-termination ribosomal complexes and subsequently prevents premature joining of the 40S and 60S ribosomal subunits prior to initiation. The eIF-3 complex specifically targets and initiates translation of a subset of mRNAs involved in cell proliferation, including cell cycling, differentiation and apoptosis, and uses different modes of RNA stem-loop binding to exert either translational activation or repression. This subunit binds directly within the mRNA entry channel of the 40S ribosome to the aminoacyl (A) site. It may regulate the interaction between the 43S PIC and mRNA. The sequence is that of Eukaryotic translation initiation factor 3 subunit J-B (Eif3j2) from Mus musculus (Mouse).